A 60-amino-acid polypeptide reads, in one-letter code: uncharacterized protein (60 aa).

The chain crosses the membrane as a helical span at residues 11–33 (VFTVGFITGGVTPVMVSFVWPAA). N-linked (GlcNAc...) asparagine; by host glycosylation is found at Asn-40 and Asn-57.

Its subcellular location is the host membrane. This is an uncharacterized protein from African swine fever virus (strain Badajoz 1971 Vero-adapted) (Ba71V).